The chain runs to 196 residues: Glycerol-3-phosphate acyltransferase (196 aa).

4 helical membrane passes run 5–25, 70–90, 111–131, and 152–172; these read GLIAFAFGYLLGSIPFGMILT, VVIALLLSGPGAAMAATLGAF, IGVLLGLFWPAALAFCAIWLL, and LLLWGFGHPQFALLFAVLTVL.

It belongs to the PlsY family. As to quaternary structure, probably interacts with PlsX.

The protein localises to the cell inner membrane. It catalyses the reaction an acyl phosphate + sn-glycerol 3-phosphate = a 1-acyl-sn-glycero-3-phosphate + phosphate. Its pathway is lipid metabolism; phospholipid metabolism. Functionally, catalyzes the transfer of an acyl group from acyl-phosphate (acyl-PO(4)) to glycerol-3-phosphate (G3P) to form lysophosphatidic acid (LPA). This enzyme utilizes acyl-phosphate as fatty acyl donor, but not acyl-CoA or acyl-ACP. This Nitrobacter winogradskyi (strain ATCC 25391 / DSM 10237 / CIP 104748 / NCIMB 11846 / Nb-255) protein is Glycerol-3-phosphate acyltransferase.